The following is a 91-amino-acid chain: MKTLLLTLVVMTIVCLDLGYTLICFISSHDSVTCAPGENVCFLKSWCDAWCGSRGKKLSFGCAATCPKVNPGIDIECCSTDNCNPHPKLRP.

Positions 1–21 are cleaved as a signal peptide; that stretch reads MKTLLLTLVVMTIVCLDLGYT. 5 disulfides stabilise this stretch: Cys-24–Cys-41, Cys-34–Cys-62, Cys-47–Cys-51, Cys-66–Cys-77, and Cys-78–Cys-83.

Belongs to the three-finger toxin family. Long-chain subfamily. Type II alpha-neurotoxin sub-subfamily. As to quaternary structure, monomer. As to expression, expressed by the venom gland.

The protein localises to the secreted. Functionally, binds with high affinity to muscular (alpha-1/CHRNA1) and neuronal (alpha-7/CHRNA7) nicotinic acetylcholine receptor (nAChR) and inhibits acetylcholine from binding to the receptor, thereby impairing neuromuscular and neuronal transmission. Recombinant LNTX1 leads to a functional block of the muscle-type acetylcholine receptors. Has a cytotoxic activity. This neurotoxin is lethal. The chain is Alpha-elapitoxin-Oh2b from Ophiophagus hannah (King cobra).